We begin with the raw amino-acid sequence, 635 residues long: Transaminated amino acid decarboxylase (635 aa).

Residue lysine 588 forms a Glycyl lysine isopeptide (Lys-Gly) (interchain with G-Cter in ubiquitin) linkage.

This sequence belongs to the TPP enzyme family. Requires Mg(2+) as cofactor. It depends on thiamine diphosphate as a cofactor.

The protein localises to the cytoplasm. The catalysed reaction is 4-methyl-2-oxopentanoate + H(+) = 3-methylbutanal + CO2. The enzyme catalyses (S)-3-methyl-2-oxopentanoate + H(+) = 2-methylbutanal + CO2. It carries out the reaction indole-3-pyruvate + H(+) = indole-3-acetaldehyde + CO2. It catalyses the reaction 3-phenylpyruvate + H(+) = 2-phenylacetaldehyde + CO2. The catalysed reaction is 4-methylsulfanyl-2-oxobutanoate + H(+) = 3-methylsulfanylpropanal + CO2. The enzyme catalyses 3-(4-hydroxyphenyl)pyruvate + H(+) = (4-hydroxyphenyl)acetaldehyde + CO2. The protein operates within amino-acid degradation; Ehrlich pathway. Its function is as follows. One of five 2-oxo acid decarboxylases (PDC1, PDC5, PDC6, ARO10, and THI3) involved in amino acid catabolism. The enzyme catalyzes the decarboxylation of amino acids, which, in a first step, have been transaminated to the corresponding 2-oxo acids (alpha-keto-acids). In a third step, the resulting aldehydes are reduced to alcohols, collectively referred to as fusel oils or alcohols. Its preferred substrates are the transaminated amino acids derived from phenylalanine (phenylpyruvate), tryptophan (3-(indol-3-yl)pyruvate), and probably tyrosine (4-hydroxyphenylpyruvate), but also isoleucine ((3S)-3-methyl-2-oxopentanoate, also alpha-keto-beta-methylvalerate) and methionine (4-methylthio-2-oxobutanoate), whereas transaminated leucine (4-methyl-2-oxopentanoate, also alpha-keto-isocaproate) is a low efficiency substrate and transaminated valine and pyruvate are no substrates. In analogy to the pyruvate decarboxylases the enzyme may in a side-reaction catalyze condensation (or carboligation) reactions leading to the formation of 2-hydroxy ketone, collectively called acyloins. The sequence is that of Transaminated amino acid decarboxylase (ARO10) from Saccharomyces cerevisiae (strain ATCC 204508 / S288c) (Baker's yeast).